A 152-amino-acid chain; its full sequence is Large ribosomal subunit protein bL9 (152 aa).

The protein belongs to the bacterial ribosomal protein bL9 family.

Binds to the 23S rRNA. The protein is Large ribosomal subunit protein bL9 of Prochlorococcus marinus (strain NATL2A).